The primary structure comprises 320 residues: Cytochrome c biogenesis protein CcsA (320 aa).

Helical transmembrane passes span 9–29, 44–64, 71–91, 99–119, 144–164, 226–246, 261–281, and 287–307; these read ILIHISFSVVSIVITIYFLTL, GMIVTFFCITGLLAARWIYSG, LYESLIFLSWSFSIIHMVCYF, LNAITGPSAILTQGFATSGLL, MVLGYAALLCGSLLSVALLVI, IISLGFIFLTIGILSGAVWAN, WAFITWTIFAIYLHIRTNINL, and AIVASMGFLIIWICYFGVNLL.

Belongs to the CcmF/CycK/Ccl1/NrfE/CcsA family. May interact with Ccs1.

It localises to the plastid. It is found in the chloroplast thylakoid membrane. Required during biogenesis of c-type cytochromes (cytochrome c6 and cytochrome f) at the step of heme attachment. This is Cytochrome c biogenesis protein CcsA from Carica papaya (Papaya).